Consider the following 248-residue polypeptide: Glutathione S-transferase omega-2 (248 aa).

The region spanning Gly22–Lys101 is the GST N-terminal domain. Residue Cys32 is the Nucleophile of the active site. Glutathione-binding positions include Lys59, Ile72, and Glu85–Ser86. In terms of domain architecture, GST C-terminal spans Asp106–Phe231.

It belongs to the GST superfamily. Omega family.

It catalyses the reaction RX + glutathione = an S-substituted glutathione + a halide anion + H(+). The enzyme catalyses L-dehydroascorbate + 2 glutathione = glutathione disulfide + L-ascorbate. It carries out the reaction methylarsonate + 2 glutathione + H(+) = methylarsonous acid + glutathione disulfide + H2O. In terms of biological role, exhibits glutathione-dependent thiol transferase activity. Has high dehydroascorbate reductase activity and may contribute to the recycling of ascorbic acid. Participates in the biotransformation of inorganic arsenic and reduces monomethylarsonic acid (MMA). The chain is Glutathione S-transferase omega-2 (Gsto2) from Mus musculus (Mouse).